Consider the following 260-residue polypeptide: 3'-5' ssDNA/RNA exonuclease TatD (260 aa).

3 residues coordinate a divalent metal cation: Glu-92, His-128, and His-153.

This sequence belongs to the metallo-dependent hydrolases superfamily. TatD-type hydrolase family. TatD subfamily. In terms of assembly, monomer. It depends on Mg(2+) as a cofactor.

It localises to the cytoplasm. Functionally, 3'-5' exonuclease that prefers single-stranded DNA and RNA. May play a role in the H(2)O(2)-induced DNA damage repair. The protein is 3'-5' ssDNA/RNA exonuclease TatD of Pantoea ananatis (strain LMG 20103).